Reading from the N-terminus, the 460-residue chain is A-type ATP synthase subunit B (460 aa).

It belongs to the ATPase alpha/beta chains family. In terms of assembly, has multiple subunits, A(3), B(3), C, D, E, F, G, I and K(x); there may be a few other subunits as well.

Its subcellular location is the cell membrane. Functionally, component of the A-type ATP synthase that produces ATP from ADP in the presence of a proton gradient across the membrane. The B chain is a regulatory subunit. This chain is A-type ATP synthase subunit B, found in Methanosarcina mazei (strain ATCC BAA-159 / DSM 3647 / Goe1 / Go1 / JCM 11833 / OCM 88) (Methanosarcina frisia).